The following is a 2179-amino-acid chain: Axotactin (2179 aa).

An N-terminal signal peptide occupies residues 1 to 18 (MAFPYIWALLPLICSASG). Over 19 to 1816 (LSLPNMTSTD…DENKQEDSTQ (1798 aa)) the chain is Extracellular. 2 N-linked (GlcNAc...) asparagine glycosylation sites follow: asparagine 23 and asparagine 52. The disordered stretch occupies residues 59–107 (GGLAGSSTGGQSLPDTGGGNSAGGSPAGGSSGTGGGGSNSGISGNNSAM). Positions 74 to 97 (TGGGNSAGGSPAGGSSGTGGGGSN) are enriched in gly residues. An N-linked (GlcNAc...) asparagine glycan is attached at asparagine 103. Positions 119 to 170 (CAGPGDPGPCKQYIYKWRYEPTTNECTNFIWGGCEGNPQNRFGTEAECLFHC) constitute a BPTI/Kunitz inhibitor domain. Intrachain disulfides connect cysteine 119/cysteine 170, cysteine 128/cysteine 152, and cysteine 144/cysteine 166. The segment at 201 to 220 (YTQSPAQSPDGMGGAEGGDG) is disordered. Gly residues predominate over residues 211–220 (GMGGAEGGDG). The region spanning 242–438 (KTFIFAKNNT…TKHENVNEGC (197 aa)) is the Laminin G-like 1 domain. N-linked (GlcNAc...) asparagine glycosylation is present at asparagine 249. 4 disulfide bridges follow: cysteine 405–cysteine 438, cysteine 442–cysteine 455, cysteine 449–cysteine 464, and cysteine 466–cysteine 476. The EGF-like 1 domain occupies 439–477 (SDMCESRHNLCFVGSRCINHYGGISCDCFGTHYEGEHCD). Laminin G-like domains are found at residues 481–664 (ATII…AEFV) and 660–839 (EAEF…LDNC). Asparagine 542, asparagine 571, and asparagine 741 each carry an N-linked (GlcNAc...) asparagine glycan. 4 disulfide bridges follow: cysteine 808–cysteine 839, cysteine 845–cysteine 857, cysteine 851–cysteine 866, and cysteine 868–cysteine 878. Residues 841–879 (YIDPCKRPNTCEHGGKCFVKDDRVTCDCKHTGYIGKNCH) enclose the EGF-like 2 domain. Residues asparagine 925, asparagine 1000, asparagine 1019, and asparagine 1026 are each glycosylated (N-linked (GlcNAc...) asparagine). The Laminin G-like 4 domain maps to 1087–1259 (YVVTFTTSQS…VHLSEIIKDC (173 aa)). Disulfide bonds link cysteine 1231-cysteine 1259, cysteine 1263-cysteine 1274, cysteine 1268-cysteine 1283, and cysteine 1285-cysteine 1296. An EGF-like 3 domain is found at 1260-1297 (KPSCVPSPCRNGAQCKELWSSFKCVCNNPWAHIGEFCE). The region spanning 1316 to 1526 (RNYLSVGATP…PTQEGVLPNC (211 aa)) is the Laminin G-like 5 domain. The N-linked (GlcNAc...) asparagine glycan is linked to asparagine 1393. Cystine bridges form between cysteine 1494–cysteine 1526, cysteine 1530–cysteine 1541, cysteine 1535–cysteine 1552, and cysteine 1554–cysteine 1564. An EGF-like 4 domain is found at 1527-1565 (QIKCDAEPCKNGGTCQEHFAEQLSTCDCEHTSFLGEFCS). Residues 1569–1765 (GADFSGESTL…NPQGVRSAQC (197 aa)) enclose the Laminin G-like 6 domain. 4 N-linked (GlcNAc...) asparagine glycosylation sites follow: asparagine 1667, asparagine 1707, asparagine 1751, and asparagine 1782. A disulfide bridge links cysteine 1722 with cysteine 1765. A helical transmembrane segment spans residues 1817 to 1837 (VVFLTLTSVFVIIVICCLLEV). The Cytoplasmic portion of the chain corresponds to 1838-2179 (YRSHLAYKKR…TSIDSILSLD (342 aa)). Disordered stretches follow at residues 1891-2141 (YTYK…PTLF) and 2156-2179 (SYLG…LSLD). Over residues 1916–1930 (GSATPSQPGTPTALS) the composition is skewed to polar residues. Acidic residues predominate over residues 1940-1949 (EEEEEEEDEA). Positions 1954–1966 (AAEKSGENEEPPA) are enriched in basic and acidic residues. Polar residues-rich tracts occupy residues 1969–1981 (TTAS…QAQP) and 2010–2025 (EPSS…QLAQ). Positions 2064–2079 (PQEHKSRHKATDDTEA) are enriched in basic and acidic residues. Low complexity predominate over residues 2082–2091 (QQQQQQQQQQ). 2 stretches are compositionally biased toward polar residues: residues 2092–2105 (SFDV…SSLP) and 2165–2179 (PRSN…LSLD).

The protein localises to the cell projection. It localises to the axon. Its subcellular location is the membrane. In terms of biological role, may have serine protease inhibitor activity. Might play a role in the glial-neuronal signaling pathway that is important in establishing the electrical properties of axonal membranes. This is Axotactin from Drosophila melanogaster (Fruit fly).